A 367-amino-acid chain; its full sequence is S-adenosylmethionine decarboxylase proenzyme 3 (367 aa).

Residues E9 and E12 contribute to the active site. S69 functions as the Schiff-base intermediate with substrate; via pyruvic acid in the catalytic mechanism. S69 carries the post-translational modification Pyruvic acid (Ser); by autocatalysis. C83 serves as the catalytic Proton donor; for catalytic activity. Residues S234 and H247 each act as proton acceptor; for processing activity in the active site.

This sequence belongs to the eukaryotic AdoMetDC family. Pyruvate serves as cofactor. In terms of processing, is synthesized initially as an inactive proenzyme. Formation of the active enzyme involves a self-maturation process in which the active site pyruvoyl group is generated from an internal serine residue via an autocatalytic post-translational modification. Two non-identical subunits are generated from the proenzyme in this reaction, and the pyruvate is formed at the N-terminus of the alpha chain, which is derived from the carboxyl end of the proenzyme. The post-translation cleavage follows an unusual pathway, termed non-hydrolytic serinolysis, in which the side chain hydroxyl group of the serine supplies its oxygen atom to form the C-terminus of the beta chain, while the remainder of the serine residue undergoes an oxidative deamination to produce ammonia and the pyruvoyl group blocking the N-terminus of the alpha chain.

It carries out the reaction S-adenosyl-L-methionine + H(+) = S-adenosyl 3-(methylsulfanyl)propylamine + CO2. It participates in amine and polyamine biosynthesis; S-adenosylmethioninamine biosynthesis; S-adenosylmethioninamine from S-adenosyl-L-methionine: step 1/1. The protein is S-adenosylmethionine decarboxylase proenzyme 3 (SAMDC3) of Brassica juncea (Indian mustard).